The chain runs to 109 residues: Fluoride-specific ion channel FluC 1 (109 aa).

A run of 4 helical transmembrane segments spans residues 1–21 (MVIV…YFFS), 29–49 (LPLG…VFYN), 55–75 (EVYA…STLN), and 87–107 (VFYS…FLGI). Gly66 and Thr69 together coordinate Na(+).

This sequence belongs to the fluoride channel Fluc/FEX (TC 1.A.43) family.

Its subcellular location is the cell membrane. The catalysed reaction is fluoride(in) = fluoride(out). With respect to regulation, na(+) is not transported, but it plays an essential structural role and its presence is essential for fluoride channel function. Fluoride-specific ion channel. Important for reducing fluoride concentration in the cell, thus reducing its toxicity. In Streptococcus pneumoniae (strain ATCC BAA-255 / R6), this protein is Fluoride-specific ion channel FluC 1.